Reading from the N-terminus, the 259-residue chain is tRNA (guanine-N(7)-)-methyltransferase (259 aa).

Residues 1-74 are disordered; that stretch reads MGHHGQMHAQ…PAEDPDRPGP (74 aa). S-adenosyl-L-methionine is bound by residues Glu91, Glu116, Asn143, and Asp166. Residue Asp166 is part of the active site. Substrate-binding positions include Lys170, Asp202, and 238–241; that span reads TKYE.

The protein belongs to the class I-like SAM-binding methyltransferase superfamily. TrmB family.

The enzyme catalyses guanosine(46) in tRNA + S-adenosyl-L-methionine = N(7)-methylguanosine(46) in tRNA + S-adenosyl-L-homocysteine. Its pathway is tRNA modification; N(7)-methylguanine-tRNA biosynthesis. Catalyzes the formation of N(7)-methylguanine at position 46 (m7G46) in tRNA. This is tRNA (guanine-N(7)-)-methyltransferase from Mycobacterium avium (strain 104).